The sequence spans 195 residues: Imidazoleglycerol-phosphate dehydratase (195 aa).

The protein belongs to the imidazoleglycerol-phosphate dehydratase family.

It localises to the cytoplasm. The catalysed reaction is D-erythro-1-(imidazol-4-yl)glycerol 3-phosphate = 3-(imidazol-4-yl)-2-oxopropyl phosphate + H2O. Its pathway is amino-acid biosynthesis; L-histidine biosynthesis; L-histidine from 5-phospho-alpha-D-ribose 1-diphosphate: step 6/9. The protein is Imidazoleglycerol-phosphate dehydratase of Burkholderia cenocepacia (strain ATCC BAA-245 / DSM 16553 / LMG 16656 / NCTC 13227 / J2315 / CF5610) (Burkholderia cepacia (strain J2315)).